The chain runs to 92 residues: PqqA binding protein (92 aa).

Belongs to the PqqD family. As to quaternary structure, monomer. Interacts with PqqE.

The protein operates within cofactor biosynthesis; pyrroloquinoline quinone biosynthesis. Its function is as follows. Functions as a PqqA binding protein and presents PqqA to PqqE, in the pyrroloquinoline quinone (PQQ) biosynthetic pathway. This chain is PqqA binding protein, found in Xanthomonas campestris pv. campestris (strain B100).